The following is a 274-amino-acid chain: 2,3,4,5-tetrahydropyridine-2,6-dicarboxylate N-succinyltransferase (274 aa).

This sequence belongs to the transferase hexapeptide repeat family.

It is found in the cytoplasm. The enzyme catalyses (S)-2,3,4,5-tetrahydrodipicolinate + succinyl-CoA + H2O = (S)-2-succinylamino-6-oxoheptanedioate + CoA. Its pathway is amino-acid biosynthesis; L-lysine biosynthesis via DAP pathway; LL-2,6-diaminopimelate from (S)-tetrahydrodipicolinate (succinylase route): step 1/3. The polypeptide is 2,3,4,5-tetrahydropyridine-2,6-dicarboxylate N-succinyltransferase (Proteus mirabilis (strain HI4320)).